The following is a 175-amino-acid chain: Peptide deformylase (175 aa).

Fe cation-binding residues include cysteine 99 and histidine 141. The active site involves glutamate 142. Histidine 145 is a Fe cation binding site.

The protein belongs to the polypeptide deformylase family. It depends on Fe(2+) as a cofactor.

The catalysed reaction is N-terminal N-formyl-L-methionyl-[peptide] + H2O = N-terminal L-methionyl-[peptide] + formate. Functionally, removes the formyl group from the N-terminal Met of newly synthesized proteins. Requires at least a dipeptide for an efficient rate of reaction. N-terminal L-methionine is a prerequisite for activity but the enzyme has broad specificity at other positions. The chain is Peptide deformylase from Rickettsia akari (strain Hartford).